The chain runs to 153 residues: Cofilin (153 aa).

An ADF-H domain is found at Gly-15–Ser-147.

This sequence belongs to the actin-binding proteins ADF family.

The protein resides in the cytoplasm. The protein localises to the cytoskeleton. Its subcellular location is the nucleus matrix. Its function is as follows. Controls reversibly actin polymerization and depolymerization in a pH-sensitive manner. It has the ability to bind G- and F-actin in a 1:1 ratio of cofilin to actin. Binding to F-actin is regulated by tropomyosin. It is the major component of intranuclear and cytoplasmic actin rods. Required for accumulation of actin at the cell division site via depolymerizing actin at the cell ends. In association with myosin II has a role in the assembly of the contractile ring via severing actin filaments. Involved in the maintenance of the contractile ring once formed. In association with profilin and capping protein, has a role in the mitotic reorganization of the actin cytoskeleton. This is Cofilin (COF1) from Yarrowia lipolytica (strain CLIB 122 / E 150) (Yeast).